The sequence spans 461 residues: Bacterial E1-like protein BilD (461 aa).

Cys-385 serves as the catalytic Glycyl thioester intermediate.

In terms of biological role, component of the Bil (bacterial ISG15-like) antiviral defense system, composed of BilA, BilB, BilC and BilD. The Bil system specifically conjugates a ubiquitin-like moiety (bilA) to the bacteriophage central tail fiber (CTF, or tip attachment protein J) via reactions involving E1 (bilD) and E2 (bilB). Modifies CTF of phage SECphi27 and SECphi4, which probably interferes with assembly of the phage tail. Also modifies T5 baseplate hub protein pb3 (gene D16), but not gp27 of phage T6 (Bil defends against T6). BilD (E1) catalyzes the first step in conjugation. Activates ubiquitin-like BilA by first adenylating its C-terminal glycine residue with ATP, and then conjugates it to the side chain of a cysteine residue in E1 (this protein), yielding a ubiquitin-E1 thioester and free AMP. Bil-encoding bacteria produce mostly defective phage SECphi27, many of which have phage assembly defects, including no tails. SECphi27 phage progeny produced in E.coli with the Bil system inject less DNA into naive host cells, maybe because the phage are less able to adsorb and inject their DNA into host cells. Functionally, expression of the Bil system in E.coli (strain MG1655) confers about 100-fold resistance to phage SECphi27, SECphi18, SECphi6, SECphi4 and T5, but not to SECphi17. When cells expressing the Bil system are infected by phage SECphi27 at low multiplicity of infection (0.03 MOI) the culture survives, at 3.0 MOI the culture collapses at the same time as cells without the Bil system. The sequence is that of Bacterial E1-like protein BilD from Collimonas sp. (strain OK412).